Here is a 632-residue protein sequence, read N- to C-terminus: Biosynthetic arginine decarboxylase (632 aa).

Lys101 is modified (N6-(pyridoxal phosphate)lysine). 281-291 (FDVGGGLGVDY) provides a ligand contact to substrate.

It belongs to the Orn/Lys/Arg decarboxylase class-II family. SpeA subfamily. The cofactor is Mg(2+). Pyridoxal 5'-phosphate is required as a cofactor.

The catalysed reaction is L-arginine + H(+) = agmatine + CO2. It functions in the pathway amine and polyamine biosynthesis; agmatine biosynthesis; agmatine from L-arginine: step 1/1. Functionally, catalyzes the biosynthesis of agmatine from arginine. The chain is Biosynthetic arginine decarboxylase from Salmonella dublin (strain CT_02021853).